A 561-amino-acid polypeptide reads, in one-letter code: Alpha-1D adrenergic receptor (561 aa).

Topologically, residues Met1–Gly90 are extracellular. Residues Thr10–Ala71 form a disordered region. Gly residues predominate over residues Gly21 to Ser56. 2 N-linked (GlcNAc...) asparagine glycosylation sites follow: Asn60 and Asn76. A helical transmembrane segment spans residues Val91 to Val115. Residues Ala116–Tyr127 are Cytoplasmic-facing. Residues Phe128–Leu153 traverse the membrane as a helical segment. At Gly154 to Cys163 the chain is on the extracellular side. The chain crosses the membrane as a helical span at residues Asp164–Val186. Residues Asp187–Ala207 are Cytoplasmic-facing. The chain crosses the membrane as a helical span at residues Ala208–Pro232. The Extracellular segment spans residues Val233 to Glu245. A helical transmembrane segment spans residues Val246–Cys269. The Cytoplasmic segment spans residues Arg270–Lys342. A helical membrane pass occupies residues Thr343–Leu367. The Extracellular segment spans residues Phe368–Ser374. The chain crosses the membrane as a helical span at residues Glu375–Ser399. The Cytoplasmic segment spans residues Ser400–Ile561. Cys413 is lipidated: S-palmitoyl cysteine. The interval Ala452–Ala481 is disordered. Over residues Thr467–Lys479 the composition is skewed to polar residues.

The protein belongs to the G-protein coupled receptor 1 family. Adrenergic receptor subfamily. ADRA1D sub-subfamily. Interacts with FLNA (via filamin repeat 21); increases PKA-mediated phosphorylation of FLNA. Palmitoylated. Palmitoylation by ZDHHC21 may increase the expression of the receptor and regulate downstream signaling. In terms of tissue distribution, vas deferens, hippocampus, cerebral cortex, aorta, brain stem, heart and spleen.

It localises to the cell membrane. Functionally, this alpha-adrenergic receptor mediates its effect through the influx of extracellular calcium. In Rattus norvegicus (Rat), this protein is Alpha-1D adrenergic receptor (Adra1d).